A 165-amino-acid chain; its full sequence is Phosphopantetheine adenylyltransferase (165 aa).

Serine 9 is a binding site for substrate. ATP is bound by residues 9 to 10 and histidine 17; that span reads SF. The substrate site is built by lysine 41, isoleucine 75, and arginine 89. ATP-binding positions include 90 to 92, glutamate 100, and 125 to 131; these read GVR and YLFVRSD.

Belongs to the bacterial CoaD family. In terms of assembly, homohexamer. Requires Mg(2+) as cofactor.

The protein localises to the cytoplasm. It carries out the reaction (R)-4'-phosphopantetheine + ATP + H(+) = 3'-dephospho-CoA + diphosphate. It functions in the pathway cofactor biosynthesis; coenzyme A biosynthesis; CoA from (R)-pantothenate: step 4/5. Reversibly transfers an adenylyl group from ATP to 4'-phosphopantetheine, yielding dephospho-CoA (dPCoA) and pyrophosphate. In Borrelia duttonii (strain Ly), this protein is Phosphopantetheine adenylyltransferase.